We begin with the raw amino-acid sequence, 412 residues long: MAGKAAAPGTAVLLVTANVGSLFDDPENLQKNWLREFYQVLHTHKPHFMALHCQEFGGKNYEASMSHVDKFVKELLSSDAMKEYNRARVYLDENYKSQEHFTALGSFYFLHESLKNIYQFDFKAKKYKKVTGKEIYSDTLESTPMLEKEKFPQDYFPECKWSRKGFIRTRWCIADCAFDLVNIHLFHDASNLVAWETSPSVYSGVRHKALGYVLDRIIDQRFEKVSYFVFGDFNFRLDSKSVVETLCTKATMQTVRAADTNEVVKLIFRESDNDRKVVLQLEKKLFDYFNQDVFRDNNGTALLEFDKELSVFKDRLYELDISFPPSYPYSEDSSQGEQYMNTRCPAWCDRILMSLSAKELVLKSESEEKVATYDHIGPNVCMGDHKPVFLAFRIAPGAGKPHAHVHKCCVVQ.

The S-farnesyl cysteine moiety is linked to residue Cys-409. The propeptide at 410-412 (VVQ) is removed in mature form.

This sequence belongs to the inositol 1,4,5-trisphosphate 5-phosphatase type I family. As to quaternary structure, interacts with TASOR. In terms of processing, isoprenylation at Cys-409 is required for localization at the membrane. Expressed at high levels in cerebellar Purkinje cells (at protein level). Expressed in Sertoli cells of the testis.

It localises to the cell membrane. Its subcellular location is the cell projection. It is found in the dendrite. It catalyses the reaction 1D-myo-inositol 1,4,5-trisphosphate + H2O = 1D-myo-inositol 1,4-bisphosphate + phosphate. The catalysed reaction is 1D-myo-inositol 1,3,4,5-tetrakisphosphate + H2O = 1D-myo-inositol 1,3,4-trisphosphate + phosphate. In terms of biological role, phosphatase that specifically hydrolyzes the 5-phosphate of inositol 1,4,5-trisphosphate to inositol 1,4-bisphosphate, and inositol 1,3,4,5-tetrasphosphate to inositol 1,3,4-trisphosphate. Plays a crucial role in the survival of cerebellar Purkinje cells. The sequence is that of Inositol polyphosphate-5-phosphatase A (Inpp5a) from Mus musculus (Mouse).